A 761-amino-acid polypeptide reads, in one-letter code: MTDGGMLISPSALQDPGDGARPEDIAMDCTDGEEELCLEEILTLYSQPINEEQAWAVCYQCCRWLTQKHRRKETGVSPPGRIAGPGDVRIRKDGNVKLYQPSNPDKHTPPSSSIEIIESLGIMIYKALDYGLKEHEERELSPPLEQLIDLMTNMADTETDCPDEGYEATEEEDEGEEENAEVSNVRGYRDIISLCLSHLPSPSDAPNHYQAVCRALYAETKELRTFLEKIKSAKENLRKMEGETEEPVRDLNELQNADWARFWVQVMRDLRHGVKLKKVQERQYNPLAIEYQLTPYEMLMDDIRSKRYKLRKVMVNGDIPPRLKKSAHEIILEFIRSRPPLNPVSARKLKPHAPQPPTLHERILEEIRSERKLRPVSPDMIRRSRLGAGKSISTPQDLFRSSDIPDGPRKLAISTLSLANGTSPARSPVNGVAGGHSLSQRKRLLKAPTLAELDSSDSEEEQSTRKSDSSSSISTSLVEDTSPESVMGKKPPPQFLPISSTPQPDKRIAPQRRHSIEKEAPTNIRHFLPPSRQNSKSLAHALGSGHAEEFCFPVECLTLTVEEVMHIRQVLVKAELEKFQQYKDIYNALKKGKLCFSCRSKKFSLFTWSYTCQFCKRPVCSQCCKKMKLPSKPHASLPISSLGPSILPKKEPGASSAPTDKTSSTSSHKKNSLQRSLSRSSKHGDRSSSKDELELPEQFTEDWSTMEVCVDCKKFINDIISNSRRNLSTKRARLHRRTHSVYSSSTSSSNYKPTERTIKEV.

Disordered regions lie at residues Met-1 to Glu-23 and Asp-160 to Ser-183. A KIND domain is found at Leu-36–Leu-223. The segment covering Asp-160–Ala-180 has biased composition (acidic residues). Residues Ala-218 to Glu-246 adopt a coiled-coil conformation. WH2 domains lie at Pro-295–Val-313 and Leu-359–Val-376. Disordered stretches follow at residues Pro-375–Asp-406 and Ala-419–Ala-539. The span at Ser-469–Asp-480 shows a compositional bias: low complexity. Positions Pro-504–Ala-520 are enriched in basic and acidic residues. The segment at Leu-557–Glu-577 is spir-box. Disordered stretches follow at residues Pro-630–Glu-694 and Ser-728–Val-761. Residues Ser-636 to Leu-647 are compositionally biased toward low complexity. Basic and acidic residues predominate over residues Lys-682–Leu-693. Basic residues predominate over residues Ser-728–His-739. Residues Ser-740–Ser-749 show a composition bias toward low complexity.

This sequence belongs to the spire family.

Its subcellular location is the cytoplasm. The protein localises to the cytoskeleton. The protein resides in the cytosol. It localises to the cleavage furrow. It is found in the perinuclear region. Its subcellular location is the cell membrane. The protein localises to the cytoplasmic vesicle membrane. Acts as an actin nucleation factor, remains associated with the slow-growing pointed end of the new filament. Involved in intracellular vesicle transport along actin fibers, providing a novel link between actin cytoskeleton dynamics and intracellular transport. Required for asymmetric spindle positioning and asymmetric cell division during meiosis. Required for normal formation of the cleavage furrow and for polar body extrusion during female germ cell meiosis. Also acts in the nucleus: together with FMN2, promotes assembly of nuclear actin filaments in response to DNA damage in order to facilitate movement of chromatin and repair factors after DNA damage. In addition, promotes innate immune signaling downstream of dsRNA sensing. Mechanistically, contributes to IRF3 phosphorylation and activation downstream of MAVS and upstream of TBK1. The sequence is that of Protein spire homolog 1 from Danio rerio (Zebrafish).